The chain runs to 313 residues: Alpha-S1-casein (313 aa).

Positions methionine 1–alanine 15 are cleaved as a signal peptide. A compositionally biased stretch (low complexity) spans alanine 77 to serine 96. The interval alanine 77–asparagine 111 is disordered. A phosphoserine mark is found at serine 90, serine 91, serine 93, serine 94, serine 95, and serine 96. Tandem repeats lie at residues leucine 135–serine 140, leucine 141–serine 146, leucine 147–serine 152, leucine 153–serine 158, leucine 159–serine 164, leucine 165–serine 170, leucine 171–serine 176, methionine 177–serine 182, leucine 183–leucine 188, leucine 189–serine 194, leucine 195–serine 200, proline 201–serine 206, leucine 207–phenylalanine 212, leucine 213–serine 218, and leucine 219–histidine 224. The tract at residues leucine 135 to histidine 224 is 15 X 6 AA tandem repeats.

Belongs to the alpha-casein family. Mammary gland specific. Secreted in milk.

It localises to the secreted. Its function is as follows. Important role in the capacity of milk to transport calcium phosphate. The polypeptide is Alpha-S1-casein (Csn1s1) (Mus musculus (Mouse)).